Consider the following 103-residue polypeptide: Large ribosomal subunit protein eL30 (103 aa).

This sequence belongs to the eukaryotic ribosomal protein eL30 family.

In Methanothrix thermoacetophila (strain DSM 6194 / JCM 14653 / NBRC 101360 / PT) (Methanosaeta thermophila), this protein is Large ribosomal subunit protein eL30.